The chain runs to 391 residues: Acridone synthase 2 (391 aa).

The active site involves cysteine 164.

This sequence belongs to the thiolase-like superfamily. Chalcone/stilbene synthases family. Homodimer.

The catalysed reaction is N-methylanthraniloyl-CoA + 3 malonyl-CoA + 3 H(+) = 1,3-dihydroxy-N-methylacridone + 3 CO2 + 4 CoA + H2O. This chain is Acridone synthase 2 (ACS2), found in Ruta graveolens (Common rue).